The sequence spans 176 residues: Shikimate kinase (176 aa).

Residue 17-24 participates in ATP binding; the sequence is GMMGVGKS.

It belongs to the shikimate kinase family.

Its subcellular location is the cytoplasm. It catalyses the reaction shikimate + ATP = 3-phosphoshikimate + ADP + H(+). Its pathway is metabolic intermediate biosynthesis; chorismate biosynthesis; chorismate from D-erythrose 4-phosphate and phosphoenolpyruvate: step 5/7. The sequence is that of Shikimate kinase from Zymomonas mobilis subsp. mobilis (strain ATCC 31821 / ZM4 / CP4).